Here is a 435-residue protein sequence, read N- to C-terminus: Methylenetetrahydrofolate--tRNA-(uracil-5-)-methyltransferase TrmFO (435 aa).

9 to 14 (GGGLAG) is a binding site for FAD.

It belongs to the MnmG family. TrmFO subfamily. The cofactor is FAD.

The protein resides in the cytoplasm. The enzyme catalyses uridine(54) in tRNA + (6R)-5,10-methylene-5,6,7,8-tetrahydrofolate + NADH + H(+) = 5-methyluridine(54) in tRNA + (6S)-5,6,7,8-tetrahydrofolate + NAD(+). It catalyses the reaction uridine(54) in tRNA + (6R)-5,10-methylene-5,6,7,8-tetrahydrofolate + NADPH + H(+) = 5-methyluridine(54) in tRNA + (6S)-5,6,7,8-tetrahydrofolate + NADP(+). In terms of biological role, catalyzes the folate-dependent formation of 5-methyl-uridine at position 54 (M-5-U54) in all tRNAs. This is Methylenetetrahydrofolate--tRNA-(uracil-5-)-methyltransferase TrmFO from Geobacter sp. (strain M21).